Reading from the N-terminus, the 683-residue chain is E3 ubiquitin-protein ligase WAVH1 (683 aa).

Residues 130-176 (CGICLQSVKSGQGTAIFTAECSHTFHFPCVTSRAAANHNRLASCPVC) form an RING-type; atypical zinc finger. Positions 302–438 (DLVAVLDVSG…AHSRIPIHTI (137 aa)) constitute a VWFA domain.

As to expression, expressed in root tips and leaf primordia.

It catalyses the reaction S-ubiquitinyl-[E2 ubiquitin-conjugating enzyme]-L-cysteine + [acceptor protein]-L-lysine = [E2 ubiquitin-conjugating enzyme]-L-cysteine + N(6)-ubiquitinyl-[acceptor protein]-L-lysine.. Its function is as follows. E3 ubiquitin-protein ligase involved in the regulation of root growth. Acts as a positive regulator of root gravitropism. Possesses E3 protein ligase activity in vitro. The sequence is that of E3 ubiquitin-protein ligase WAVH1 from Arabidopsis thaliana (Mouse-ear cress).